The following is a 163-amino-acid chain: ATP synthase subunit b (163 aa).

A helical transmembrane segment spans residues 10–29 (VFMQMFHFLLMLVVLRLFAY).

Belongs to the ATPase B chain family. In terms of assembly, F-type ATPases have 2 components, F(1) - the catalytic core - and F(0) - the membrane proton channel. F(1) has five subunits: alpha(3), beta(3), gamma(1), delta(1), epsilon(1). F(0) has three main subunits: a(1), b(2) and c(10-14). The alpha and beta chains form an alternating ring which encloses part of the gamma chain. F(1) is attached to F(0) by a central stalk formed by the gamma and epsilon chains, while a peripheral stalk is formed by the delta and b chains.

The protein localises to the cell membrane. Its function is as follows. F(1)F(0) ATP synthase produces ATP from ADP in the presence of a proton or sodium gradient. F-type ATPases consist of two structural domains, F(1) containing the extramembraneous catalytic core and F(0) containing the membrane proton channel, linked together by a central stalk and a peripheral stalk. During catalysis, ATP synthesis in the catalytic domain of F(1) is coupled via a rotary mechanism of the central stalk subunits to proton translocation. Functionally, component of the F(0) channel, it forms part of the peripheral stalk, linking F(1) to F(0). The polypeptide is ATP synthase subunit b (Desulforudis audaxviator (strain MP104C)).